Here is a 358-residue protein sequence, read N- to C-terminus: DNA ligase C (358 aa).

Lys-29 acts as the N6-AMP-lysine intermediate in catalysis.

This sequence belongs to the ATP-dependent DNA ligase family. The cofactor is a divalent metal cation.

The enzyme catalyses ATP + (deoxyribonucleotide)n-3'-hydroxyl + 5'-phospho-(deoxyribonucleotide)m = (deoxyribonucleotide)n+m + AMP + diphosphate.. DNA ligase that seals nicks in double-stranded DNA during DNA replication, DNA recombination and DNA repair. The protein is DNA ligase C (ligC) of Mycobacterium tuberculosis (strain ATCC 25618 / H37Rv).